The sequence spans 240 residues: RNA-free ribonuclease P (240 aa).

Belongs to the HARP family.

It carries out the reaction Endonucleolytic cleavage of RNA, removing 5'-extranucleotides from tRNA precursor.. Its function is as follows. RNA-free RNase P that catalyzes the removal of the 5'-leader sequence from pre-tRNA to produce the mature 5'-terminus. This chain is RNA-free ribonuclease P, found in Methanococcus aeolicus (strain ATCC BAA-1280 / DSM 17508 / OCM 812 / Nankai-3).